Consider the following 408-residue polypeptide: LL-diaminopimelate aminotransferase (408 aa).

The substrate site is built by tyrosine 15 and glycine 42. Pyridoxal 5'-phosphate-binding positions include tyrosine 72, serine 108–lysine 109, tyrosine 132, asparagine 187, tyrosine 218, and serine 246–serine 248. Residues lysine 109, tyrosine 132, and asparagine 187 each coordinate substrate. Position 249 is an N6-(pyridoxal phosphate)lysine (lysine 249). Pyridoxal 5'-phosphate-binding residues include arginine 257 and asparagine 292. Substrate-binding residues include asparagine 292 and arginine 388.

Belongs to the class-I pyridoxal-phosphate-dependent aminotransferase family. LL-diaminopimelate aminotransferase subfamily. As to quaternary structure, homodimer. It depends on pyridoxal 5'-phosphate as a cofactor.

The catalysed reaction is (2S,6S)-2,6-diaminopimelate + 2-oxoglutarate = (S)-2,3,4,5-tetrahydrodipicolinate + L-glutamate + H2O + H(+). It functions in the pathway amino-acid biosynthesis; L-lysine biosynthesis via DAP pathway; LL-2,6-diaminopimelate from (S)-tetrahydrodipicolinate (aminotransferase route): step 1/1. Involved in the synthesis of meso-diaminopimelate (m-DAP or DL-DAP), required for both lysine and peptidoglycan biosynthesis. Catalyzes the direct conversion of tetrahydrodipicolinate to LL-diaminopimelate. This chain is LL-diaminopimelate aminotransferase, found in Synechococcus sp. (strain WH7803).